Reading from the N-terminus, the 345-residue chain is N-acetyl-gamma-glutamyl-phosphate reductase (345 aa).

Cys149 is a catalytic residue.

It belongs to the NAGSA dehydrogenase family. Type 1 subfamily.

The protein resides in the cytoplasm. It catalyses the reaction N-acetyl-L-glutamate 5-semialdehyde + phosphate + NADP(+) = N-acetyl-L-glutamyl 5-phosphate + NADPH + H(+). Its pathway is amino-acid biosynthesis; L-arginine biosynthesis; N(2)-acetyl-L-ornithine from L-glutamate: step 3/4. Its function is as follows. Catalyzes the NADPH-dependent reduction of N-acetyl-5-glutamyl phosphate to yield N-acetyl-L-glutamate 5-semialdehyde. This chain is N-acetyl-gamma-glutamyl-phosphate reductase, found in Bacillus cereus (strain AH187).